We begin with the raw amino-acid sequence, 364 residues long: Tripartite motif-containing protein 54 (364 aa).

The segment at 26 to 82 (CPICLEMFSKPVVILPCQHNLCRKCANDVFQASNPLWQSRGSTTVSSGGRFRCPSCR) adopts an RING-type zinc-finger fold. The B box-type zinc-finger motif lies at 121–163 (EQHLMCEEHEDEKINIYCLSCEVPTCSLCKVFGAHKDCEVAPL). Cysteine 126, histidine 129, cysteine 149, and histidine 155 together coordinate Zn(2+). The mediates microtubule-binding and homooligomerization stretch occupies residues 168 to 211 (KRQKSELSDGIAMLVAGNDRVQAVITQMEEVCQTIEDNSRRQKQ). The stretch at 194–252 (QMEEVCQTIEDNSRRQKQLLNQKFETLCAVLEERKGELLQALARVQEEKLQRVRSLIRQ) forms a coiled coil. The COS domain maps to 271-329 (MEEPQMALYLQQAKELINKVGAMSKVELAGRPEPGYESMEQFSVIVEHVAEMLRTIDFQ). Residues 328–364 (FQPGASGDEEDDEVTLDGEEGNTGLEEERLDGPEGLH) form a disordered region. The span at 334–347 (GDEEDDEVTLDGEE) shows a compositional bias: acidic residues. The span at 353-364 (EEERLDGPEGLH) shows a compositional bias: basic and acidic residues.

Homooligomer and heterooligomer. Interacts with TRIM63 and probably with TRIM55. Interacts with tubulin.

It is found in the cytoplasm. The protein localises to the cytoskeleton. It localises to the myofibril. The protein resides in the sarcomere. Its subcellular location is the z line. May bind and stabilize microtubules during myotubes formation. This Rattus norvegicus (Rat) protein is Tripartite motif-containing protein 54 (Trim54).